Reading from the N-terminus, the 869-residue chain is Bifunctional uridylyltransferase/uridylyl-removing enzyme (869 aa).

Residues 1-332 (MTATPADRPD…QFDGEAVPVQ (332 aa)) form a uridylyltransferase region. The uridylyl-removing stretch occupies residues 333–691 (LDAGFSLRRG…RRAVPDNDAL (359 aa)). The HD domain occupies 450–572 (VDQHTLMVLR…VGTRERLDYL (123 aa)). 2 ACT domains span residues 692–771 (EVFV…PSRR) and 798–869 (RISL…LDPT).

The protein belongs to the GlnD family. Mg(2+) is required as a cofactor.

The catalysed reaction is [protein-PII]-L-tyrosine + UTP = [protein-PII]-uridylyl-L-tyrosine + diphosphate. It carries out the reaction [protein-PII]-uridylyl-L-tyrosine + H2O = [protein-PII]-L-tyrosine + UMP + H(+). Uridylyltransferase (UTase) activity is inhibited by glutamine, while glutamine activates uridylyl-removing (UR) activity. In terms of biological role, modifies, by uridylylation and deuridylylation, the PII regulatory proteins (GlnB and homologs), in response to the nitrogen status of the cell that GlnD senses through the glutamine level. Under low glutamine levels, catalyzes the conversion of the PII proteins and UTP to PII-UMP and PPi, while under higher glutamine levels, GlnD hydrolyzes PII-UMP to PII and UMP (deuridylylation). Thus, controls uridylylation state and activity of the PII proteins, and plays an important role in the regulation of nitrogen assimilation and metabolism. This chain is Bifunctional uridylyltransferase/uridylyl-removing enzyme, found in Xanthomonas campestris pv. campestris (strain 8004).